A 203-amino-acid polypeptide reads, in one-letter code: MTQQEIVTINAELRDITKTKAMHSLRKKGNIPGIIYGKGHDNVNLTLSAKEFTKQYKSGSLSAHLIELNISGKKEYALVRDIQLHVVKDTVQHVDFQFVDKGSEIKIDIPLSFVNESKAPGIKLGGVLNVLCRSIAVKCSPDKIPQVIEVDLSGKMIGQSIHINDVKLPEGVKFVAHEEENFTIVTISAADSDVEEPQAETEE.

Belongs to the bacterial ribosomal protein bL25 family. CTC subfamily. As to quaternary structure, part of the 50S ribosomal subunit; part of the 5S rRNA/L5/L18/L25 subcomplex. Contacts the 5S rRNA. Binds to the 5S rRNA independently of L5 and L18.

In terms of biological role, this is one of the proteins that binds to the 5S RNA in the ribosome where it forms part of the central protuberance. This chain is Large ribosomal subunit protein bL25, found in Wolbachia pipientis wMel.